We begin with the raw amino-acid sequence, 954 residues long: DNA repair and telomere maintenance protein NBS1 (954 aa).

An FHA domain is found at Tyr-22–Ile-85. 2 consecutive BRCT domains span residues Thr-107–Val-186 and Gly-244–Ile-349. Over residues Val-368–Gln-377 the composition is skewed to polar residues. Disordered regions lie at residues Val-368 to Phe-431, Gln-444 to Glu-506, Ile-528 to Asp-580, Val-630 to Arg-654, and Gly-692 to Arg-954. Residues Ser-378–Glu-393 are compositionally biased toward basic and acidic residues. The span at Pro-416 to Phe-428 shows a compositional bias: basic residues. Positions Pro-458–Glu-471 are enriched in polar residues. The segment covering Pro-541 to Glu-554 has biased composition (acidic residues). 2 stretches are compositionally biased toward basic and acidic residues: residues Arg-640–Arg-654 and Gly-704–Thr-715. The segment covering Asp-726–Gly-737 has biased composition (low complexity). Residues Lys-738–Gly-751 show a composition bias toward basic and acidic residues. Composition is skewed to low complexity over residues Glu-801 to Pro-815 and Arg-826 to Gln-842. Residues Gly-936–Glu-945 are compositionally biased toward acidic residues.

This sequence belongs to the Nibrin family. In terms of assembly, component of the MRN complex composed of two heterodimers RAD50 and MRE11 associated with a single NBS1.

It is found in the nucleus. The protein localises to the chromosome. Its function is as follows. Component of the MRN complex, which plays a central role in double-strand break (DSB) repair, DNA recombination, maintenance of telomere integrity and meiosis. The MRN complex is involved in the repair of DNA double-strand breaks (DSBs) via homologous recombination (HR), an error-free mechanism which primarily occurs during S and G2 phases. The complex (1) mediates the end resection of damaged DNA, which generates proper single-stranded DNA, a key initial steps in HR, and is (2) required for the recruitment of other repair factors and efficient activation of ATM and ATR upon DNA damage. The MRN complex possesses single-strand endonuclease activity and double-strand-specific 3'-5' exonuclease activity, which are provided by MRE11, to initiate end resection, which is required for single-strand invasion and recombination. Within the MRN complex, NBS1 acts as a protein-protein adapter, which specifically recognizes and binds phosphorylated proteins, promoting their recruitment to DNA damage sites. Recruits MRE11 and RAD50 components of the MRN complex to DSBs in response to DNA damage. In Chaetomium thermophilum (strain DSM 1495 / CBS 144.50 / IMI 039719) (Thermochaetoides thermophila), this protein is DNA repair and telomere maintenance protein NBS1.